The chain runs to 103 residues: uncharacterized protein (103 aa).

This is an uncharacterized protein from Sulfolobus islandicus filamentous virus (isolate Iceland/Hveragerdi) (SIFV).